We begin with the raw amino-acid sequence, 1808 residues long: Tenascin (1808 aa).

An N-terminal signal peptide occupies residues 1 to 22 (MGLPSQVLACAILGLLYQHASG). Positions 23–33 (GLIKRIIRQKR) are excised as a propeptide. Asparagine 38 carries N-linked (GlcNAc...) asparagine glycosylation. Residue serine 72 is glycosylated (O-linked (Xyl...) (chondroitin sulfate) serine). Residues 118-142 (DIKDLLSRLEELEGLVSSLREQCAS) are a coiled coil. Residues asparagine 168 and asparagine 186 are each glycosylated (N-linked (GlcNAc...) asparagine). The EGF-like 1; incomplete domain occupies 176–188 (CVCEPGWKGPNCS). EGF-like domains lie at 188–219 (SEPACPRNCLNRGLCVRGKCICEEGFTGEDCS), 219–250 (SQAACPSDCNDQGKCVDGVCVCFEGYTGPDCG), 250–281 (GEELCPHGCGIHGRCVGGRCVCHEGFTGEDCN), 281–312 (NEPLCPNNCHNRGRCVDNECVCDEGYTGEDCG), 312–343 (GELICPNDCFDRGRCINGTCFCEEGYTGEDCG), 343–374 (GELTCPNNCNGNGRCENGLCVCHEGFVGDDCS), 374–405 (SQKRCPKDCNNRGHCVDGRCVCHEGYLGEDCG), 405–436 (GELRCPNDCHNRGRCINGQCVCDEGFIGEDCG), 436–467 (GELRCPNDCHNRGRCVNGQCECHEGFIGEDCG), 467–498 (GELRCPNDCNSHGRCVNGQCVCDEGYTGEDCG), 498–529 (GELRCPNDCHNRGRCVEGRCVCDNGFMGEDCG), 529–560 (GELSCPNDCHQHGRCVDGRCVCHEGFTGEDCR), and 560–591 (RERSCPNDCNNVGRCVEGRCVCEEGYMGIDCS). 39 disulfides stabilise this stretch: cysteine 192–cysteine 202, cysteine 196–cysteine 207, cysteine 209–cysteine 218, cysteine 223–cysteine 233, cysteine 227–cysteine 238, cysteine 240–cysteine 249, cysteine 254–cysteine 264, cysteine 258–cysteine 269, cysteine 271–cysteine 280, cysteine 285–cysteine 295, cysteine 289–cysteine 300, cysteine 302–cysteine 311, cysteine 316–cysteine 326, cysteine 320–cysteine 331, cysteine 333–cysteine 342, cysteine 347–cysteine 357, cysteine 351–cysteine 362, cysteine 364–cysteine 373, cysteine 378–cysteine 388, cysteine 382–cysteine 393, cysteine 395–cysteine 404, cysteine 409–cysteine 419, cysteine 413–cysteine 424, cysteine 426–cysteine 435, cysteine 440–cysteine 450, cysteine 444–cysteine 455, cysteine 457–cysteine 466, cysteine 471–cysteine 481, cysteine 475–cysteine 486, cysteine 488–cysteine 497, cysteine 502–cysteine 512, cysteine 506–cysteine 517, cysteine 519–cysteine 528, cysteine 533–cysteine 543, cysteine 537–cysteine 548, cysteine 550–cysteine 559, cysteine 564–cysteine 574, cysteine 568–cysteine 579, and cysteine 581–cysteine 590. Asparagine 328 carries an N-linked (GlcNAc...) asparagine glycan. Fibronectin type-III domains lie at 595 to 685 (PPTE…LPAP), 686 to 775 (EGLK…TKLD), 776 to 866 (APSQ…DLDA), 867 to 957 (PRNL…TDLD), 958 to 1046 (NPKD…EEEP), 1047 to 1138 (ELGN…AHPE), 1139 to 1228 (VGEL…EAEP), 1229 to 1318 (EVDN…TVVG), 1319 to 1408 (SPKG…ALDS), 1409 to 1495 (PSGL…TGLD), and 1496 to 1584 (APKD…TGLL). N-linked (GlcNAc...) asparagine glycosylation is found at asparagine 603, asparagine 643, asparagine 751, and asparagine 759. 6 N-linked (GlcNAc...) asparagine glycosylation sites follow: asparagine 1050, asparagine 1090, asparagine 1101, asparagine 1112, asparagine 1153, and asparagine 1183. N-linked (GlcNAc...) asparagine glycosylation occurs at asparagine 1416. One can recognise a Fibrinogen C-terminal domain in the interval 1582 to 1797 (GLLYPYPKDC…FAEMKLRPSS (216 aa)). N-linked (GlcNAc...) asparagine glycosylation is found at asparagine 1736 and asparagine 1769.

It belongs to the tenascin family. As to quaternary structure, homohexamer; disulfide-linked. A homotrimer may be formed in the triple coiled-coil region and may be stabilized by disulfide rings at both ends. Two of such half-hexabrachions may be disulfide linked within the central globule. Interacts with CSPG5. In terms of tissue distribution, expressed in the brain.

The protein resides in the secreted. Its subcellular location is the extracellular space. It is found in the extracellular matrix. Extracellular matrix protein implicated in guidance of migrating neurons as well as axons during development, synaptic plasticity as well as neuronal regeneration. Ligand for integrins alpha-8/beta-1, alpha-9/beta-1, alpha-V/beta-3 and alpha-V/beta-6. In Gallus gallus (Chicken), this protein is Tenascin (TNC).